The primary structure comprises 257 residues: Small ribosomal subunit protein uS2 (257 aa).

This sequence belongs to the universal ribosomal protein uS2 family.

This chain is Small ribosomal subunit protein uS2, found in Ruegeria pomeroyi (strain ATCC 700808 / DSM 15171 / DSS-3) (Silicibacter pomeroyi).